The following is a 268-amino-acid chain: Hydroxyethylthiazole kinase (268 aa).

Substrate is bound at residue Met45. Arg121 and Thr167 together coordinate ATP. Residue Gly194 participates in substrate binding.

This sequence belongs to the Thz kinase family. Mg(2+) is required as a cofactor.

It carries out the reaction 5-(2-hydroxyethyl)-4-methylthiazole + ATP = 4-methyl-5-(2-phosphooxyethyl)-thiazole + ADP + H(+). It participates in cofactor biosynthesis; thiamine diphosphate biosynthesis; 4-methyl-5-(2-phosphoethyl)-thiazole from 5-(2-hydroxyethyl)-4-methylthiazole: step 1/1. In terms of biological role, catalyzes the phosphorylation of the hydroxyl group of 4-methyl-5-beta-hydroxyethylthiazole (THZ). The chain is Hydroxyethylthiazole kinase from Bacillus cereus (strain Q1).